The primary structure comprises 956 residues: Zinc fingers and homeoboxes protein 3 (956 aa).

Residues 1-107 (MASKRKSTTP…SEHTDFNKDP (107 aa)) are required for nuclear localization. The interval 22–66 (DASMEAQPAETLPEGPQQDLPPEASAASSEAAQNPSSTDGSTLAN) is disordered. Residues 42–58 (PPEASAASSEAAQNPSS) show a composition bias toward low complexity. C2H2-type zinc fingers lie at residues 77–100 (YSCK…NSEH) and 109–132 (FVCS…ATCH). Residues 242–488 (ASASSAKNPH…LLTACPSITS (247 aa)) form a required for homodimerization and interaction with NFYA region. Positions 303-502 (LSSIPTYNAA…DASIYKNKKS (200 aa)) are required for repressor activity. 2 consecutive DNA-binding regions (homeobox) follow at residues 304-363 (SSIP…GISW) and 494-553 (ASIY…RNLK). The segment at 497 to 555 (YKNKKSHEQLSALKGSFCRNQFPGQSEVEHLTKVTGLSTREVRKWFSDRRYHCRNLKGS) is required for nuclear localization. 2 disordered regions span residues 598–618 (PSAK…KYKE) and 666–695 (KVNA…GEED). Phosphoserine is present on residues Ser-599 and Ser-604. Residues 612–671 (TPTKYKERAPEQLRALESSFAQNPLPLDEELDRLRSETKMTRREIDSWFSERRKKVNAEE) constitute a DNA-binding region (homeobox 3). Basic and acidic residues predominate over residues 666-677 (KVNAEETKKAEE). Residues 679-695 (ASQEEEEAAEDEGGEED) are compositionally biased toward acidic residues. Residues Ser-680, Ser-708, and Ser-723 each carry the phosphoserine modification. 2 consecutive DNA-binding regions (homeobox) follow at residues 764–823 (PGKV…KNGQ) and 835–894 (FPPG…TRAV). A disordered region spans residues 890 to 956 (ETRAVADTGS…PQAGRQLETD (67 aa)). Phosphoserine occurs at positions 927 and 946.

The protein belongs to the ZHX family. In terms of assembly, homodimer (via homeobox domain 1). Heterodimer with ZHX1 (via homeobox domain 1). Heterodimer with ZHX2 (via homeobox domain 1). Heterodimerization with ZHX1 is a prerequisite for repressor activity. Interacts with NFYA. In terms of tissue distribution, widely expressed. High expression in kidney. Expressed during osteogenic differentiation.

The protein resides in the nucleus. In terms of biological role, acts as a transcriptional repressor. Involved in the early stages of mesenchymal stem cell (MSC) osteogenic differentiation. Is a regulator of podocyte gene expression during primary glomerula disease. Binds to promoter DNA. The chain is Zinc fingers and homeoboxes protein 3 (ZHX3) from Homo sapiens (Human).